A 221-amino-acid chain; its full sequence is PKHD-type hydroxylase NATL1_16191 (221 aa).

In terms of domain architecture, Fe2OG dioxygenase spans 80–174 (LIHGVMFTQS…RHVCVGWIQS (95 aa)). Positions 98, 100, and 155 each coordinate Fe cation. A 2-oxoglutarate-binding site is contributed by arginine 165.

Fe(2+) serves as cofactor. The cofactor is L-ascorbate.

In Prochlorococcus marinus (strain NATL1A), this protein is PKHD-type hydroxylase NATL1_16191.